Here is a 215-residue protein sequence, read N- to C-terminus: Cytochrome b6 (215 aa).

Residues 32 to 52 (IFYCFGGIVFTCFLVQVATGF) traverse the membrane as a helical segment. C35 contacts heme c. Residues H86 and H100 each coordinate heme b. A run of 3 helical transmembrane segments spans residues 90 to 110 (ASMM…TGGF), 116 to 136 (LTWV…VTGY), and 186 to 206 (AHTF…FLMI). 2 residues coordinate heme b: H187 and H202.

This sequence belongs to the cytochrome b family. PetB subfamily. The 4 large subunits of the cytochrome b6-f complex are cytochrome b6, subunit IV (17 kDa polypeptide, PetD), cytochrome f and the Rieske protein, while the 4 small subunits are PetG, PetL, PetM and PetN. The complex functions as a dimer. The cofactor is heme b. Heme c is required as a cofactor.

It localises to the plastid. The protein resides in the chloroplast thylakoid membrane. Component of the cytochrome b6-f complex, which mediates electron transfer between photosystem II (PSII) and photosystem I (PSI), cyclic electron flow around PSI, and state transitions. The chain is Cytochrome b6 from Trieres chinensis (Marine centric diatom).